Consider the following 291-residue polypeptide: G1/S-specific cyclin-D1 (291 aa).

Thr-282 is subject to Phosphothreonine.

Belongs to the cyclin family. Cyclin D subfamily. As to quaternary structure, interacts with the CDK4 and CDK6 protein kinases to form a serine/threonine kinase holoenzyme complex. The cyclin subunit imparts substrate specificity to the complex. Phosphorylation at Thr-282 by MAP kinases is required for ubiquitination and degradation by the DCX(AMBRA1) complex. Post-translationally, ubiquitinated by the DCX(AMBRA1) complex during the transition from G1 to S cell phase, leading to its degradation. The DCX(AMBRA1) complex represents the major regulator of CCND1 stability during the G1/S transition.

It is found in the nucleus. The protein resides in the cytoplasm. In terms of biological role, regulatory component of the cyclin D1-CDK4 (DC) complex that phosphorylates and inhibits members of the retinoblastoma (RB) protein family including RB1 and regulates the cell-cycle during G(1)/S transition. Phosphorylation of RB1 allows dissociation of the transcription factor E2F from the RB/E2F complex and the subsequent transcription of E2F target genes which are responsible for the progression through the G(1) phase. Hypophosphorylates RB1 in early G(1) phase. Cyclin D-CDK4 complexes are major integrators of various mitogenenic and antimitogenic signals. The chain is G1/S-specific cyclin-D1 (ccnd1) from Danio rerio (Zebrafish).